Here is a 341-residue protein sequence, read N- to C-terminus: tRNA N6-adenosine threonylcarbamoyltransferase (341 aa).

Fe cation contacts are provided by His-115 and His-119. Residues 138 to 142, Asp-171, Gly-184, Asp-188, and Asn-279 each bind substrate; that span reads VVSGG. A Fe cation-binding site is contributed by Asp-307.

The protein belongs to the KAE1 / TsaD family. Requires Fe(2+) as cofactor.

The protein localises to the cytoplasm. The catalysed reaction is L-threonylcarbamoyladenylate + adenosine(37) in tRNA = N(6)-L-threonylcarbamoyladenosine(37) in tRNA + AMP + H(+). Its function is as follows. Required for the formation of a threonylcarbamoyl group on adenosine at position 37 (t(6)A37) in tRNAs that read codons beginning with adenine. Is involved in the transfer of the threonylcarbamoyl moiety of threonylcarbamoyl-AMP (TC-AMP) to the N6 group of A37, together with TsaE and TsaB. TsaD likely plays a direct catalytic role in this reaction. The sequence is that of tRNA N6-adenosine threonylcarbamoyltransferase from Clostridium kluyveri (strain NBRC 12016).